The sequence spans 320 residues: ATP-dependent 6-phosphofructokinase (320 aa).

An ATP-binding site is contributed by glycine 12. 22–26 is a binding site for ADP; it reads RGVVR. ATP contacts are provided by residues 73-74 and 103-106; these read RF and GDGS. Aspartate 104 contributes to the Mg(2+) binding site. 126–128 is a substrate binding site; the sequence is TID. Aspartate 128 acts as the Proton acceptor in catalysis. Arginine 155 provides a ligand contact to ADP. Residues arginine 163 and 170–172 contribute to the substrate site; that span reads MGR. ADP contacts are provided by residues 186 to 188, lysine 212, and 214 to 216; these read GCE and KKH. Substrate-binding positions include glutamate 223, arginine 244, and 250–253; that span reads HIQR.

It belongs to the phosphofructokinase type A (PFKA) family. ATP-dependent PFK group I subfamily. Prokaryotic clade 'B1' sub-subfamily. As to quaternary structure, homotetramer. Mg(2+) serves as cofactor.

Its subcellular location is the cytoplasm. It catalyses the reaction beta-D-fructose 6-phosphate + ATP = beta-D-fructose 1,6-bisphosphate + ADP + H(+). Its pathway is carbohydrate degradation; glycolysis; D-glyceraldehyde 3-phosphate and glycerone phosphate from D-glucose: step 3/4. With respect to regulation, allosterically activated by ADP and other diphosphonucleosides, and allosterically inhibited by phosphoenolpyruvate. Catalyzes the phosphorylation of D-fructose 6-phosphate to fructose 1,6-bisphosphate by ATP, the first committing step of glycolysis. The chain is ATP-dependent 6-phosphofructokinase from Vibrio cholerae serotype O1 (strain ATCC 39315 / El Tor Inaba N16961).